The sequence spans 329 residues: DNA-directed RNA polymerase subunit alpha (329 aa).

Residues 1-235 (MQGSVTEFLK…EQLDAFVDLR (235 aa)) are alpha N-terminal domain (alpha-NTD). An alpha C-terminal domain (alpha-CTD) region spans residues 249–329 (FDPILLRPVD…NWPPASIAED (81 aa)).

Belongs to the RNA polymerase alpha chain family. As to quaternary structure, homodimer. The RNAP catalytic core consists of 2 alpha, 1 beta, 1 beta' and 1 omega subunit. When a sigma factor is associated with the core the holoenzyme is formed, which can initiate transcription.

The catalysed reaction is RNA(n) + a ribonucleoside 5'-triphosphate = RNA(n+1) + diphosphate. Functionally, DNA-dependent RNA polymerase catalyzes the transcription of DNA into RNA using the four ribonucleoside triphosphates as substrates. This is DNA-directed RNA polymerase subunit alpha from Actinobacillus succinogenes (strain ATCC 55618 / DSM 22257 / CCUG 43843 / 130Z).